Consider the following 260-residue polypeptide: MTILEEIVEYKQLLLQNGYYQDKLNTLKSVNIQNKKSFINAIEKEPKLAIIAEIKSKSPTVNDLPERDLSQQISDYEQYGANAVSILTDEKYFGGSFERLQALTTKTTLPVLCKDFIIDPLQIDVAKQAGASMILLIVNILSDKQLKDLYNYAISQNLEVLVEVHDRHELERAYKVNAKLIGVNNRDLKRFVTNVEHTNTILENKKPNHYYISESGIHDVSDVRKILHSGIDGLLIGEALMRCDNLSEFLPQLKMQKVKS.

Belongs to the TrpC family.

It carries out the reaction 1-(2-carboxyphenylamino)-1-deoxy-D-ribulose 5-phosphate + H(+) = (1S,2R)-1-C-(indol-3-yl)glycerol 3-phosphate + CO2 + H2O. The protein operates within amino-acid biosynthesis; L-tryptophan biosynthesis; L-tryptophan from chorismate: step 4/5. This is Indole-3-glycerol phosphate synthase from Staphylococcus aureus (strain MRSA252).